We begin with the raw amino-acid sequence, 331 residues long: Aldo-keto reductase YhdN (331 aa).

Residues 20–21 (TW) and D52 contribute to the NADP(+) site. Y57 acts as the Proton donor in catalysis. Residues Q175, 203–208 (YGSLCR), K214, R227, 280–282 (GAR), and Q286 each bind NADP(+).

The protein belongs to the aldo/keto reductase family. Aldo/keto reductase 11 subfamily. Monomer.

Functionally, aldo-keto reductase (AKR) that displays broad substrate specificity in vitro. Is able to reduce the standard AKR substrates DL-glyceraldehyde, D-erythrose, methylglyoxal, p-nitrobenzaldehyde, benzaldehyde and butyraldehyde, in the presence of NADPH. Cannot use NADH as a cosubstrate. Does not act on glucose, 2-pyridine carboxyaldehyde, fructose and xylose. The physiological function of this enzyme is not clear. May play a role in bacterial stress response and/or in detoxification of reactive aldehydes. This is Aldo-keto reductase YhdN (yhdN) from Bacillus subtilis (strain 168).